A 77-amino-acid polypeptide reads, in one-letter code: Translation initiation factor IF-1, chloroplastic (77 aa).

One can recognise an S1-like domain in the interval 1-71; sequence MKEQKWIHEG…SRGRIIYRLR (71 aa).

Belongs to the IF-1 family. In terms of assembly, component of the 30S ribosomal translation pre-initiation complex which assembles on the 30S ribosome in the order IF-2 and IF-3, IF-1 and N-formylmethionyl-tRNA(fMet); mRNA recruitment can occur at any time during PIC assembly.

It localises to the plastid. The protein resides in the chloroplast. Its function is as follows. One of the essential components for the initiation of protein synthesis. Stabilizes the binding of IF-2 and IF-3 on the 30S subunit to which N-formylmethionyl-tRNA(fMet) subsequently binds. Helps modulate mRNA selection, yielding the 30S pre-initiation complex (PIC). Upon addition of the 50S ribosomal subunit IF-1, IF-2 and IF-3 are released leaving the mature 70S translation initiation complex. The chain is Translation initiation factor IF-1, chloroplastic from Buxus microphylla (Littleleaf boxwood).